Here is a 149-residue protein sequence, read N- to C-terminus: UPF0178 protein Lmo1456 (149 aa).

Belongs to the UPF0178 family.

The polypeptide is UPF0178 protein Lmo1456 (Listeria monocytogenes serovar 1/2a (strain ATCC BAA-679 / EGD-e)).